Here is a 426-residue protein sequence, read N- to C-terminus: Stationary phase-inducible protein CsiE (426 aa).

PRD domains follow at residues 120 to 225 (ARNF…DPLR) and 229 to 336 (QRDR…ENDL).

In Escherichia coli (strain K12), this protein is Stationary phase-inducible protein CsiE (csiE).